Reading from the N-terminus, the 240-residue chain is Ribosomal RNA large subunit methyltransferase E (240 aa).

The segment covering 1 to 20 (MSKAGGNKGGSRTGGRGGAG) has biased composition (gly residues). The segment at 1–40 (MSKAGGNKGGSRTGGRGGAGSSNLHVRVKKKAGTTKESSR) is disordered. 5 residues coordinate S-adenosyl-L-methionine: Gly-92, Trp-94, Asp-115, Asp-131, and Asp-155. Residue Lys-195 is the Proton acceptor of the active site.

The protein belongs to the class I-like SAM-binding methyltransferase superfamily. RNA methyltransferase RlmE family.

Its subcellular location is the cytoplasm. It carries out the reaction uridine(2552) in 23S rRNA + S-adenosyl-L-methionine = 2'-O-methyluridine(2552) in 23S rRNA + S-adenosyl-L-homocysteine + H(+). In terms of biological role, specifically methylates the uridine in position 2552 of 23S rRNA at the 2'-O position of the ribose in the fully assembled 50S ribosomal subunit. The chain is Ribosomal RNA large subunit methyltransferase E from Brucella ovis (strain ATCC 25840 / 63/290 / NCTC 10512).